The following is a 289-amino-acid chain: Glycerol facilitator-aquaporin gla (289 aa).

The next 2 helical transmembrane spans lie at 10-30 (ITEF…VANV) and 41-61 (SWMI…VAFG). The short motif at 68 to 70 (NPA) is the NPA 1 element. Transmembrane regions (helical) follow at residues 87–107 (AQYI…IVMV), 151–171 (FLGS…FFGS), and 209–229 (MIAH…LGGP). The NPA 2 motif lies at 235–237 (NPA). Residues 264 to 284 (WYAWVPVLAPILASLAAVALF) traverse the membrane as a helical segment.

It belongs to the MIP/aquaporin (TC 1.A.8) family.

Its subcellular location is the cell membrane. Functionally, mixed channel protein that transports both water and glycerol. This is Glycerol facilitator-aquaporin gla (gla) from Lactococcus lactis subsp. cremoris (Streptococcus cremoris).